The chain runs to 316 residues: Ribosomal RNA large subunit methyltransferase F (316 aa).

Belongs to the methyltransferase superfamily. METTL16/RlmF family.

It is found in the cytoplasm. The catalysed reaction is adenosine(1618) in 23S rRNA + S-adenosyl-L-methionine = N(6)-methyladenosine(1618) in 23S rRNA + S-adenosyl-L-homocysteine + H(+). Functionally, specifically methylates the adenine in position 1618 of 23S rRNA. This is Ribosomal RNA large subunit methyltransferase F from Pseudomonas putida (strain GB-1).